The chain runs to 96 residues: Aspartyl/glutamyl-tRNA(Asn/Gln) amidotransferase subunit C (96 aa).

This sequence belongs to the GatC family. In terms of assembly, heterotrimer of A, B and C subunits.

It carries out the reaction L-glutamyl-tRNA(Gln) + L-glutamine + ATP + H2O = L-glutaminyl-tRNA(Gln) + L-glutamate + ADP + phosphate + H(+). It catalyses the reaction L-aspartyl-tRNA(Asn) + L-glutamine + ATP + H2O = L-asparaginyl-tRNA(Asn) + L-glutamate + ADP + phosphate + 2 H(+). In terms of biological role, allows the formation of correctly charged Asn-tRNA(Asn) or Gln-tRNA(Gln) through the transamidation of misacylated Asp-tRNA(Asn) or Glu-tRNA(Gln) in organisms which lack either or both of asparaginyl-tRNA or glutaminyl-tRNA synthetases. The reaction takes place in the presence of glutamine and ATP through an activated phospho-Asp-tRNA(Asn) or phospho-Glu-tRNA(Gln). This Chloroflexus aurantiacus (strain ATCC 29366 / DSM 635 / J-10-fl) protein is Aspartyl/glutamyl-tRNA(Asn/Gln) amidotransferase subunit C.